The chain runs to 485 residues: Ribosomal protein S6 kinase beta-2 (485 aa).

Residues 1–26 (MAAVFDLDLETEEGSEGEGEPEFSPA) form a disordered region. Over residues 7–21 (LDLETEEGSEGEGEP) the composition is skewed to acidic residues. Position 15 is a phosphoserine (S15). The region spanning 67–328 (FELLSVLGKG…AADVQRHPFF (262 aa)) is the Protein kinase domain. ATP contacts are provided by residues 73-81 (LGKGGYGKV) and K99. The Proton acceptor role is filled by D194. Residues 329–399 (RHINWDDLLA…VAPSVLDSIK (71 aa)) enclose the AGC-kinase C-terminal domain. Positions 407-485 (KLRSPRRLNS…SKKGRGRSGR (79 aa)) are disordered. At S417 the chain carries Phosphoserine. Position 420 is a phosphothreonine (T420). A Phosphoserine modification is found at S423. Over residues 436-469 (SPGPPEPMEPSLPPLLPSPPSPPPTSTAPLPIRP) the composition is skewed to pro residues. The Nuclear localization signal signature appears at 474–480 (KKSKKGR). The span at 474-485 (KKSKKGRGRSGR) shows a compositional bias: basic residues. At S476 the chain carries Phosphoserine; by PKC.

The protein belongs to the protein kinase superfamily. AGC Ser/Thr protein kinase family. S6 kinase subfamily. Post-translationally, phosphorylated and activated by MTOR. Phosphorylation by PKC within the NLS in response to mitogenic stimuli causes cytoplasmic retention.

The protein resides in the cytoplasm. It localises to the nucleus. It catalyses the reaction L-seryl-[protein] + ATP = O-phospho-L-seryl-[protein] + ADP + H(+). The catalysed reaction is L-threonyl-[protein] + ATP = O-phospho-L-threonyl-[protein] + ADP + H(+). Phosphorylates specifically ribosomal protein S6. Seems to act downstream of mTOR signaling in response to growth factors and nutrients to promote cell proliferation, cell growth and cell cycle progression in an alternative pathway regulated by MEAK7. The polypeptide is Ribosomal protein S6 kinase beta-2 (Rps6kb2) (Mus musculus (Mouse)).